The chain runs to 326 residues: Glyceraldehyde-3-phosphate dehydrogenase, cytosolic (326 aa).

NAD(+) contacts are provided by residues 2 to 3, Asp-24, and Arg-71; that span reads RI. Residues 142-144, Thr-173, 202-203, and Arg-225 each bind D-glyceraldehyde 3-phosphate; these read SCT and TG. The active-site Nucleophile is Cys-143. Residue Asn-307 participates in NAD(+) binding.

It belongs to the glyceraldehyde-3-phosphate dehydrogenase family.

It is found in the cytoplasm. The catalysed reaction is D-glyceraldehyde 3-phosphate + phosphate + NAD(+) = (2R)-3-phospho-glyceroyl phosphate + NADH + H(+). It participates in carbohydrate degradation; glycolysis; pyruvate from D-glyceraldehyde 3-phosphate: step 1/5. Key enzyme in glycolysis that catalyzes the first step of the pathway by converting D-glyceraldehyde 3-phosphate (G3P) into 3-phospho-D-glyceroyl phosphate. Essential for the maintenance of cellular ATP levels and carbohydrate metabolism. This Nicotiana tabacum (Common tobacco) protein is Glyceraldehyde-3-phosphate dehydrogenase, cytosolic (GAPC).